A 130-amino-acid chain; its full sequence is Small ribosomal subunit protein uS9 (130 aa).

This sequence belongs to the universal ribosomal protein uS9 family.

This Burkholderia cenocepacia (strain HI2424) protein is Small ribosomal subunit protein uS9.